The chain runs to 122 residues: MALDVNAIVDQLKESSILELNDLVKAIEEEFGVSAAAPVAAAGAAGADAAAEKDSFTVELSEIGQEKVKVIKAVREITGLGLKDAKGLVDNAPSALKEDVSKDEAEEMKAKLEEVGAVVNLK.

Belongs to the bacterial ribosomal protein bL12 family. In terms of assembly, homodimer. Part of the ribosomal stalk of the 50S ribosomal subunit. Forms a multimeric L10(L12)X complex, where L10 forms an elongated spine to which 2 to 4 L12 dimers bind in a sequential fashion. Binds GTP-bound translation factors.

Forms part of the ribosomal stalk which helps the ribosome interact with GTP-bound translation factors. Is thus essential for accurate translation. This chain is Large ribosomal subunit protein bL12, found in Latilactobacillus sakei subsp. sakei (strain 23K) (Lactobacillus sakei subsp. sakei).